Reading from the N-terminus, the 484-residue chain is Major extracellular endoglucanase (484 aa).

An N-terminal signal peptide occupies residues 1 to 25 (MSIFRTASTLALATALALAAGPAFS). The Proton donor role is filled by Glu-182. Glu-303 (nucleophile) is an active-site residue. A disordered region spans residues 370-402 (GTAGNTTPTPTPTPTPTPTPTPTPTPTPTPGTS). Residues 375 to 399 (TTPTPTPTPTPTPTPTPTPTPTPTP) form a thr-Pro repeats ('hinge') (Pro-Thr box) region. Pro residues predominate over residues 378–398 (TPTPTPTPTPTPTPTPTPTPT). The region spanning 395 to 484 (PTPTPGTSTF…TAEFGFCAAS (90 aa)) is the CBM2 domain.

Belongs to the glycosyl hydrolase 5 (cellulase A) family.

The catalysed reaction is Endohydrolysis of (1-&gt;4)-beta-D-glucosidic linkages in cellulose, lichenin and cereal beta-D-glucans.. The protein is Major extracellular endoglucanase (engXCA) of Xanthomonas campestris pv. campestris (strain ATCC 33913 / DSM 3586 / NCPPB 528 / LMG 568 / P 25).